The following is a 188-amino-acid chain: Ion-translocating oxidoreductase complex subunit B (188 aa).

Positions 1 to 23 (MIEAAVSMSALGLGLGLLLGVAA) are hydrophobic. In terms of domain architecture, 4Fe-4S spans 29 to 88 (ESPPIVDAIEGILPGTNCGACGYPGCRGLAEAMSEGAAPVTACAPGGRDVALALAAIVET). Residues C46, C49, C54, C71, C113, C116, C119, C123, C143, C146, C149, and C153 each contribute to the [4Fe-4S] cluster site. 4Fe-4S ferredoxin-type domains are found at residues 104–133 (TVAFIFEDHCTGCMRCFKRCPTDAIIGANR) and 134–163 (QIHTVVTDACIGCNACIEACPTEAIVARVK).

This sequence belongs to the 4Fe4S bacterial-type ferredoxin family. RnfB subfamily. As to quaternary structure, the complex is composed of six subunits: RnfA, RnfB, RnfC, RnfD, RnfE and RnfG. It depends on [4Fe-4S] cluster as a cofactor.

The protein resides in the cellular chromatophore membrane. In terms of biological role, part of a membrane-bound complex that couples electron transfer with translocation of ions across the membrane. The polypeptide is Ion-translocating oxidoreductase complex subunit B (Cereibacter sphaeroides (strain ATCC 17023 / DSM 158 / JCM 6121 / CCUG 31486 / LMG 2827 / NBRC 12203 / NCIMB 8253 / ATH 2.4.1.) (Rhodobacter sphaeroides)).